The following is a 206-amino-acid chain: RNA pyrophosphohydrolase (206 aa).

The Nudix hydrolase domain occupies 6–149 (GYRPNVGIVL…KRGVYARALR (144 aa)). The short motif at 38–59 (GGMNTDETPVEAMYRELQEETG) is the Nudix box element. Positions 175-206 (MPGHTAGHDRPRKRPRTRGYWPKKATGDGPAS) are disordered.

This sequence belongs to the Nudix hydrolase family. RppH subfamily. It depends on a divalent metal cation as a cofactor.

Accelerates the degradation of transcripts by removing pyrophosphate from the 5'-end of triphosphorylated RNA, leading to a more labile monophosphorylated state that can stimulate subsequent ribonuclease cleavage. The sequence is that of RNA pyrophosphohydrolase from Stenotrophomonas maltophilia (strain K279a).